Consider the following 513-residue polypeptide: Sucrose transport protein SUC1 (513 aa).

Residues 1 to 11 show a composition bias toward basic and acidic residues; the sequence is MGAYETEKPTK. The segment at 1–26 is disordered; the sequence is MGAYETEKPTKDAAALETQSPEDFDQ. Residues 1–32 are Cytoplasmic-facing; that stretch reads MGAYETEKPTKDAAALETQSPEDFDQPSPLRK. S20 bears the Phosphoserine mark. A helical transmembrane segment spans residues 33-53; that stretch reads IISVASIAAGVQFGWALQLSL. At 54–67 the chain is on the extracellular side; that stretch reads LTPYVQLLGIPHKW. The chain crosses the membrane as a helical span at residues 68 to 88; the sequence is SSLIWLCGPVSGMIVQPIVGF. Topologically, residues 89-101 are cytoplasmic; it reads HSDRCRSKFGRRR. Residues 102-122 form a helical membrane-spanning segment; it reads PFIATGAALVAVAVFLIGYAA. Topologically, residues 123-139 are extracellular; that stretch reads DFGYKMGDKLEEKVKVR. A helical transmembrane segment spans residues 140–160; sequence AIGIFALGFWILDVANNTLQG. Residues 161–178 lie on the Cytoplasmic side of the membrane; sequence PCRAFLADLAAGDAKRTR. The chain crosses the membrane as a helical span at residues 179–199; that stretch reads VANAFFSFFMAVGNVLGYAAG. At 200-224 the chain is on the extracellular side; the sequence is SYTNLHKMFPFTMTKACDIYCANLK. The helical transmembrane segment at 225-245 threads the bilayer; sequence TCFFLSITLLLIVTVTSLWYV. Residues 246–282 lie on the Cytoplasmic side of the membrane; it reads NDKQWSPPPRNADDDEKTSSVPLFGEIFGAFKVMKRP. The helical transmembrane segment at 283–303 threads the bilayer; that stretch reads MWMLLIVTALNWIAWFPFLLF. Topologically, residues 304–334 are extracellular; that stretch reads DTDWMGREVFGGDSDGNERSKKLYSLGVQSG. A helical membrane pass occupies residues 335–355; the sequence is AMGLMFNSIVLGFMSLGVEWI. Residues 356-365 lie on the Cytoplasmic side of the membrane; the sequence is GRKLGGAKRL. A helical membrane pass occupies residues 366–386; that stretch reads WGIVNFILAAGLAMTVLVTKF. The Extracellular portion of the chain corresponds to 387–408; it reads AEDHRKTAGDLAGPSASVKAGA. Residues 409–429 form a helical membrane-spanning segment; the sequence is LSLFAVLGIPLAITFSTPFAL. At 430 to 441 the chain is on the cytoplasmic side; sequence ASIFSSCSGAGQ. The chain crosses the membrane as a helical span at residues 442–462; that stretch reads GLSLGVLNLAIVIPQMIVSLG. Residues 463-474 are Extracellular-facing; it reads GGPFDALFGGGN. The chain crosses the membrane as a helical span at residues 475–495; sequence LPAFIVAAIAAAISGVLALTV. Topologically, residues 496–513 are cytoplasmic; that stretch reads LPSPPPDAPKATTMGGFH.

This sequence belongs to the glycoside-pentoside-hexuronide (GPH) cation symporter transporter (TC 2.A.2.4) family. In terms of tissue distribution, expressed in flowers (at protein level). Highly expressed in pollen. Expressed in pollen tubes and root vascular cylinder, pericycle and endodermis.

Its subcellular location is the membrane. The enzyme catalyses sucrose(out) + H(+)(out) = sucrose(in) + H(+)(in). It participates in glycan biosynthesis; sucrose metabolism. Its activity is regulated as follows. Inhibited by DEPC, protonophores (e.g. dinitrophenol and carbonyl cyanide m-chlorophenyl-hydrazone (CCCP)), and SH group inhibitors (e.g. N-ethylmaleimide (NEM) and p-chloromercuriphenyl sulphonic acid (PCMPS)). Functionally, responsible for the transport of sucrose into the cell, with the concomitant uptake of protons (symport system). This transport is both voltage- and energy-dependent. Can also transport other glucosides such as maltose, alpha-phenylglucoside and beta-phenylglucoside. May also transport biotin. Required for normal pollen germination and anthocyanin accumulation induced by sucrose. This is Sucrose transport protein SUC1 from Arabidopsis thaliana (Mouse-ear cress).